Reading from the N-terminus, the 171-residue chain is Transcription factor E (171 aa).

The HTH TFE/IIEalpha-type domain maps to 1–81 (MLNLAKELVG…YWKVNVNQIN (81 aa)).

Belongs to the TFE family. In terms of assembly, monomer. Interaction with RNA polymerase subunits RpoF and RpoE is necessary for Tfe stimulatory transcription activity. Able to interact with Tbp and RNA polymerase in the absence of DNA promoter. Interacts both with the preinitiation and elongation complexes.

Functionally, transcription factor that plays a role in the activation of archaeal genes transcribed by RNA polymerase. Facilitates transcription initiation by enhancing TATA-box recognition by TATA-box-binding protein (Tbp), and transcription factor B (Tfb) and RNA polymerase recruitment. Not absolutely required for transcription in vitro, but particularly important in cases where Tbp or Tfb function is not optimal. It dynamically alters the nucleic acid-binding properties of RNA polymerases by stabilizing the initiation complex and destabilizing elongation complexes. Seems to translocate with the RNA polymerase following initiation and acts by binding to the non template strand of the transcription bubble in elongation complexes. The chain is Transcription factor E from Sulfolobus acidocaldarius (strain ATCC 33909 / DSM 639 / JCM 8929 / NBRC 15157 / NCIMB 11770).